A 585-amino-acid polypeptide reads, in one-letter code: T-cell surface protein tactile (585 aa).

An N-terminal signal peptide occupies residues 1–21 (MEKKWKYCAVYYIIQIHFVKG). The Extracellular segment spans residues 22–519 (VWEKTVNTEE…IVVNKPKDGM (498 aa)). The 88-residue stretch at 38–125 (GSDVNLTCQT…YECMLVLYPE (88 aa)) folds into the Ig-like V-type 1 domain. N-linked (GlcNAc...) asparagine glycosylation is found at asparagine 42, asparagine 97, asparagine 107, asparagine 148, asparagine 156, asparagine 166, asparagine 200, asparagine 215, asparagine 277, asparagine 278, asparagine 300, asparagine 350, and asparagine 368. Cysteine 45 and cysteine 118 are oxidised to a cystine. An Ig-like V-type 2 domain is found at 156-238 (NQTLEIPCFQ…YRLHLSPVQI (83 aa)). A disulfide bridge links cysteine 163 with cysteine 247. The Ig-like C2-type domain maps to 269–375 (PEIPVIVENN…VWNISSEKIT (107 aa)). Cysteine 290 and cysteine 355 form a disulfide bridge. 3 stretches are compositionally biased toward polar residues: residues 385–418 (TDPPLSVTESTLDTQPSPASSVSPARYPATSSVT), 426–452 (RPNTTPQPSNSSMTTRGFNYPWTSSGT), and 460–475 (RIPSETYSSSPSGAGS). Positions 385 to 475 (TDPPLSVTES…YSSSPSGAGS (91 aa)) are disordered. Asparagine 435 carries an N-linked (GlcNAc...) asparagine glycan. Asparagine 497 carries N-linked (GlcNAc...) asparagine glycosylation. Residues 520 to 540 (SWPVIVAALLFCCMILFGLGV) form a helical membrane-spanning segment. Residues 541–585 (RKWCQYQKEIMERPPPFKPPPPPIKYTCIQEPNESDLPYHEMETL) lie on the Cytoplasmic side of the membrane.

In terms of assembly, homodimer; disulfide-linked. Interacts with PVR. In terms of tissue distribution, expressed on normal T-cell lines and clones, and some transformed T-cells, but no other cultured cell lines tested. It is expressed at very low levels on activated B-cells.

It localises to the membrane. Its function is as follows. May be involved in adhesive interactions of activated T and NK cells during the late phase of the immune response. Promotes NK cell-target adhesion by interacting with PVR present on target cells. May function at a time after T and NK cells have penetrated the endothelium using integrins and selectins, when they are actively engaging diseased cells and moving within areas of inflammation. The sequence is that of T-cell surface protein tactile (CD96) from Homo sapiens (Human).